A 537-amino-acid chain; its full sequence is MPHLMERMVGSGLLWLALVSCILTQASAVQRGYGNPIEASSYGLDLDCGAPGTPEAHVCFDPCQNYTLLDEPFRSTENSAGSQGCDKNMSGWYRFVGEGGVRMSETCVQVHRCQTDAPMWLNGTHPALGDGITNHTACAHWSGNCCFWKTEVLVKACPGGYHVYRLEGTPWCNLRYCTVPRDPSTVEDKCEKACRPEEECLALNSTWGCFCRQDLNSSDVHSLQPQLDCGPREIKVKVDKCLLGGLGLGEEVIAYLRDPNCSSILQTEERNWVSVTSPVQASACRNILERNQTHAIYKNTLSLVNDFIIRDTILNINFQCAYPLDMKVSLQAALQPIVSSLNVSVDGNGEFIVRMALFQDQNYTNPYEGDAVELSVESVLYVGAILEQGDTSRFNLVLRNCYATPTEDKADLVKYFIIRNSCSNQRDSTIHVEENGQSSESRFSVQMFMFAGHYDLVFLHCEIHLCDSLNEQCQPSCSRSQVRSEVPAIDLARVLDLGPITRRGAQSPGVMNGTPSTAGFLVAWPMVLLTVLLAWLF.

The first 28 residues, 1–28 (MPHLMERMVGSGLLWLALVSCILTQASA), serve as a signal peptide directing secretion. A beta hairpin region spans residues 41–60 (SYGLDLDCGAPGTPEAHVCF). Disulfide bonds link C48–C59, C63–C157, C85–C172, C107–C145, C113–C177, C138–C146, C190–C200, C194–C209, C211–C241, C229–C320, and C261–C284. The interval 61-81 (DPCQNYTLLDEPFRSTENSAG) is D10C. A glycan (N-linked (GlcNAc...) (high mannose) asparagine) is linked at N65. N-linked (GlcNAc...) asparagine glycosylation is found at N88, N122, and N134. Positions 186–230 (VEDKCEKACRPEEECLALNSTWGCFCRQDLNSSDVHSLQPQLDCG) constitute an EGF-like domain. 3 N-linked (GlcNAc...) asparagine glycosylation sites follow: N204, N216, and N260. The ZP-N stretch occupies residues 228–321 (DCGPREIKVK…TILNINFQCA (94 aa)). The ZP domain occupies 228 to 484 (DCGPREIKVK…PSCSRSQVRS (257 aa)). 2 N-linked (GlcNAc...) asparagine glycosylation sites follow: N291 and N342. A flexible ZP-N/ZP-C linker region spans residues 322-345 (YPLDMKVSLQAALQPIVSSLNVSV). Residues 346–357 (DGNGEFIVRMAL) are internal hydrophobic patch (IHP). The interval 346–484 (DGNGEFIVRM…PSCSRSQVRS (139 aa)) is ZP-C. A glycan (N-linked (GlcNAc...) asparagine) is linked at N362. 3 cysteine pairs are disulfide-bonded: C401–C461, C422–C477, and C466–C473. Positions 491–499 (LARVLDLGP) are external hydrophobic patch (EHP). N512 is lipidated: GPI-anchor amidated asparagine. The propeptide at 513–537 (GTPSTAGFLVAWPMVLLTVLLAWLF) is removed in mature form.

As to quaternary structure, interacts with SYCN. Interacts with bacterial adhesin fimH. N-glycosylated. Glycosylated Asn-65 may be required for interaction with bacterial adhesin fimH. In terms of tissue distribution, expressed in pancreas (at protein level). Specifically expressed by M (microfold) cells which are atypical epithelial cells of the intestine (at protein level).

Its subcellular location is the zymogen granule membrane. It is found in the secreted. It localises to the cell membrane. The protein resides in the apical cell membrane. The protein localises to the membrane raft. Its subcellular location is the endosome. In terms of biological role, functions as an intestinal M-cell transcytotic receptor specific for type-I-piliated bacteria that participates in the mucosal immune response toward these bacteria. At the apical membrane of M-cells it binds fimH, a protein of the bacteria type I pilus tip. Internalizes bound bacteria, like E.coli and S.typhimurium, from the lumen of the intestine and delivers them, through M-cells, to the underlying organized lymphoid follicles where they are captured by antigen-presenting dendritic cells to elicit a mucosal immune response. The sequence is that of Pancreatic secretory granule membrane major glycoprotein GP2 from Homo sapiens (Human).